The chain runs to 149 residues: MSGASARDATLLAFDYGEKRIGVAVGNALTRSARALVVIQNLNREHRFKAVGDLLAEWRPDALVVGLPMHPDGTPHDMTQQAKRFGNQLNGRFGLPVTWVDERYSSVEAEAGLRERNVRGRARAEMLDAEAARVILQQYLDQLSDHEHH.

This sequence belongs to the YqgF nuclease family.

The protein localises to the cytoplasm. In terms of biological role, could be a nuclease involved in processing of the 5'-end of pre-16S rRNA. The protein is Putative pre-16S rRNA nuclease of Burkholderia lata (strain ATCC 17760 / DSM 23089 / LMG 22485 / NCIMB 9086 / R18194 / 383).